A 142-amino-acid chain; its full sequence is Hemoglobin subunit theta-1 (142 aa).

The 141-residue stretch at 2-142 (ALSAEDRALV…VISALASEYR (141 aa)) folds into the Globin domain. Heme b contacts are provided by H59 and H88.

This sequence belongs to the globin family.

The sequence is that of Hemoglobin subunit theta-1 (HBQ1) from Pongo pygmaeus (Bornean orangutan).